A 659-amino-acid chain; its full sequence is Delta(6)-protoilludene synthase (659 aa).

Mg(2+) is bound by residues Asp91, Asn227, Ser231, and Glu235. Positions 91-95 match the DDXXD motif motif; that stretch reads DEHTD. (2E,6E)-farnesyl diphosphate is bound by residues Arg316 and Tyr317. Residues 528 to 586 form a disordered region; it reads PQFSKTSGAPNGAHTPTTTNGSIKSNGFVSGDTNGHANGNGHVQTRSSTPSSSSSSTSS. Over residues 530 to 573 the composition is skewed to polar residues; sequence FSKTSGAPNGAHTPTTTNGSIKSNGFVSGDTNGHANGNGHVQTR. The segment covering 574–586 has biased composition (low complexity); the sequence is SSTPSSSSSSTSS.

It belongs to the terpene synthase family. The cofactor is Mg(2+).

It catalyses the reaction (2E,6E)-farnesyl diphosphate = Delta(6)-protoilludene + diphosphate. Terpene cyclase that catalyzes the cyclization of farnesyl diphosphate (FPP) to delta(6)-protoilludene. The chain is Delta(6)-protoilludene synthase from Cyclocybe aegerita (Black poplar mushroom).